We begin with the raw amino-acid sequence, 465 residues long: Ribulose bisphosphate carboxylase large chain (465 aa).

At lysine 4 the chain carries N6,N6,N6-trimethyllysine. Substrate-binding residues include asparagine 113 and threonine 163. Lysine 165 functions as the Proton acceptor in the catalytic mechanism. Lysine 167 contributes to the substrate binding site. The Mg(2+) site is built by lysine 191, aspartate 193, and glutamate 194. At lysine 191 the chain carries N6-carboxylysine. Histidine 284 functions as the Proton acceptor in the catalytic mechanism. Substrate contacts are provided by arginine 285, histidine 317, and serine 369.

It belongs to the RuBisCO large chain family. Type I subfamily. In terms of assembly, heterohexadecamer of 8 large chains and 8 small chains; disulfide-linked. The disulfide link is formed within the large subunit homodimers. Requires Mg(2+) as cofactor. Post-translationally, the disulfide bond which can form in the large chain dimeric partners within the hexadecamer appears to be associated with oxidative stress and protein turnover.

The protein resides in the plastid. The protein localises to the chloroplast. It catalyses the reaction 2 (2R)-3-phosphoglycerate + 2 H(+) = D-ribulose 1,5-bisphosphate + CO2 + H2O. The enzyme catalyses D-ribulose 1,5-bisphosphate + O2 = 2-phosphoglycolate + (2R)-3-phosphoglycerate + 2 H(+). RuBisCO catalyzes two reactions: the carboxylation of D-ribulose 1,5-bisphosphate, the primary event in carbon dioxide fixation, as well as the oxidative fragmentation of the pentose substrate in the photorespiration process. Both reactions occur simultaneously and in competition at the same active site. The polypeptide is Ribulose bisphosphate carboxylase large chain (Ephedra tweediana (Vining horsetail)).